The sequence spans 274 residues: NH(3)-dependent NAD(+) synthetase (274 aa).

46-53 (GISGGQDS) is a binding site for ATP. Aspartate 52 serves as a coordination point for Mg(2+). Arginine 140 lines the deamido-NAD(+) pocket. Threonine 160 contacts ATP. Glutamate 165 contributes to the Mg(2+) binding site. Residues lysine 173 and aspartate 180 each contribute to the deamido-NAD(+) site. Positions 189 and 211 each coordinate ATP. 260 to 261 (HK) serves as a coordination point for deamido-NAD(+).

It belongs to the NAD synthetase family. Homodimer.

The enzyme catalyses deamido-NAD(+) + NH4(+) + ATP = AMP + diphosphate + NAD(+) + H(+). Its pathway is cofactor biosynthesis; NAD(+) biosynthesis; NAD(+) from deamido-NAD(+) (ammonia route): step 1/1. Catalyzes the ATP-dependent amidation of deamido-NAD to form NAD. Uses ammonia as a nitrogen source. The polypeptide is NH(3)-dependent NAD(+) synthetase (Lactococcus lactis subsp. cremoris (strain MG1363)).